The chain runs to 345 residues: Anthranilate phosphoribosyltransferase (345 aa).

5-phospho-alpha-D-ribose 1-diphosphate is bound by residues G87, 90–91 (GD), T95, 97–100 (NAST), 115–123 (KHGNRSFSS), and S127. Residue G87 participates in anthranilate binding. Residue S99 participates in Mg(2+) binding. N118 is an anthranilate binding site. R173 provides a ligand contact to anthranilate. Mg(2+) contacts are provided by D232 and E233.

Belongs to the anthranilate phosphoribosyltransferase family. In terms of assembly, homodimer. It depends on Mg(2+) as a cofactor.

It carries out the reaction N-(5-phospho-beta-D-ribosyl)anthranilate + diphosphate = 5-phospho-alpha-D-ribose 1-diphosphate + anthranilate. Its pathway is amino-acid biosynthesis; L-tryptophan biosynthesis; L-tryptophan from chorismate: step 2/5. In terms of biological role, catalyzes the transfer of the phosphoribosyl group of 5-phosphorylribose-1-pyrophosphate (PRPP) to anthranilate to yield N-(5'-phosphoribosyl)-anthranilate (PRA). The chain is Anthranilate phosphoribosyltransferase from Aeropyrum pernix (strain ATCC 700893 / DSM 11879 / JCM 9820 / NBRC 100138 / K1).